We begin with the raw amino-acid sequence, 146 residues long: Cyanate hydratase (146 aa).

Active-site residues include Arg87, Glu90, and Ser113.

It belongs to the cyanase family.

It catalyses the reaction cyanate + hydrogencarbonate + 3 H(+) = NH4(+) + 2 CO2. In terms of biological role, catalyzes the reaction of cyanate with bicarbonate to produce ammonia and carbon dioxide. This chain is Cyanate hydratase, found in Synechococcus elongatus (strain ATCC 33912 / PCC 7942 / FACHB-805) (Anacystis nidulans R2).